The primary structure comprises 66 residues: Large ribosomal subunit protein bL35 (66 aa).

This sequence belongs to the bacterial ribosomal protein bL35 family.

This is Large ribosomal subunit protein bL35 from Moorella thermoacetica (strain ATCC 39073 / JCM 9320).